A 430-amino-acid chain; its full sequence is Histidinol dehydrogenase (430 aa).

The substrate site is built by S237, Q259, and H262. Zn(2+) is bound by residues Q259 and H262. Residues E327 and H328 each act as proton acceptor in the active site. Residues H328, D361, E415, and H420 each contribute to the substrate site. D361 contributes to the Zn(2+) binding site. H420 lines the Zn(2+) pocket.

The protein belongs to the histidinol dehydrogenase family. Zn(2+) serves as cofactor.

It catalyses the reaction L-histidinol + 2 NAD(+) + H2O = L-histidine + 2 NADH + 3 H(+). The protein operates within amino-acid biosynthesis; L-histidine biosynthesis; L-histidine from 5-phospho-alpha-D-ribose 1-diphosphate: step 9/9. Functionally, catalyzes the sequential NAD-dependent oxidations of L-histidinol to L-histidinaldehyde and then to L-histidine. The sequence is that of Histidinol dehydrogenase from Mesorhizobium japonicum (strain LMG 29417 / CECT 9101 / MAFF 303099) (Mesorhizobium loti (strain MAFF 303099)).